The following is a 176-amino-acid chain: Cytochrome b (176 aa).

The next 3 helical transmembrane spans lie at 33–53, 77–98, and 113–133; these read FGSL…FLAM, WLLR…YLHI, and WNVG…GYVL. Heme b is bound by residues His83 and His97.

The protein belongs to the cytochrome b family. In terms of assembly, the cytochrome bc1 complex contains 11 subunits: 3 respiratory subunits (MT-CYB, CYC1 and UQCRFS1), 2 core proteins (UQCRC1 and UQCRC2) and 6 low-molecular weight proteins (UQCRH/QCR6, UQCRB/QCR7, UQCRQ/QCR8, UQCR10/QCR9, UQCR11/QCR10 and a cleavage product of UQCRFS1). This cytochrome bc1 complex then forms a dimer. It depends on heme b as a cofactor.

Its subcellular location is the mitochondrion inner membrane. Its function is as follows. Component of the ubiquinol-cytochrome c reductase complex (complex III or cytochrome b-c1 complex) that is part of the mitochondrial respiratory chain. The b-c1 complex mediates electron transfer from ubiquinol to cytochrome c. Contributes to the generation of a proton gradient across the mitochondrial membrane that is then used for ATP synthesis. The protein is Cytochrome b (MT-CYB) of Eumops glaucinus (Wagner's mastiff bat).